The sequence spans 465 residues: Mothers against decapentaplegic homolog 1 (465 aa).

The 125-residue stretch at 12–136 folds into the MH1 domain; the sequence is PAVKRLLGWK…YKRVESPVLP (125 aa). Zn(2+)-binding residues include Cys64, Cys109, Cys121, and His126. Residues 161-240 form a disordered region; the sequence is QNEPHMPHNA…EDQMTHDTSQ (80 aa). Residues 179 to 210 show a composition bias toward low complexity; that stretch reads PNSHPFPHSPNSSYPNSPGSSSSTYPHSPASS. An MH2 domain is found at 271-465; that stretch reads WCSIVYYELN…SPHNPISSVS (195 aa). Phosphoserine occurs at positions 463 and 465.

It belongs to the dwarfin/SMAD family. Found in a complex with SMAD4 and YY1. Interacts with HGS, NANOG and ZCCHC12. Upon C-terminus phosphorylation: forms trimers with another SMAD1 and the co-SMAD SMAD4. Interacts with PEBP2-alpha subunit, CREB-binding protein (CBP), p300, SMURF1, SMURF2, USP15 and HOXC8. Associates with ZNF423 or ZNF521 in response to BMP2 leading to activate transcription of BMP target genes. Interacts with SKOR1. Interacts (via MH2 domain) with LEMD3. Binding to LEMD3 results in at least a partial reduction of receptor-mediated phosphorylation. Forms a ternary complex with PSMB4 and OAZ1 before PSMB4 is incorporated into the 20S proteasome. Found in a macromolecular complex with FAM83G. Interacts (via MH2 domain) with FAM83G (via MH2 domain); in a SMAD4-independent manner. Interacts with ZC3H3. Interacts with TMEM119. Interacts (via MH1 and MH2 domains) with ZNF8. Interacts with RANBP3L; the interaction increases when SMAD1 is not phosphorylated and mediates SMAD1 nuclear export. Interacts with EGR1; this interaction inhibits SMAD1 dephosphorylation. Interacts with SMAD6. Interacts with YAP1. Post-translationally, phosphorylation of the C-terminal SVS motif by BMP type 1 receptor kinase activates SMAD1 by promoting dissociation from the receptor and trimerization with SMAD4. Phosphorylation by ERK2 MAP kinase in response to EGF or HGF prevents SMAD1 nuclear accumulation and transcriptional activity in response to BMP. Dephosphorylation, probably by PPM1A, induces its export from the nucleus to the cytoplasm. Dephosphorylation is inhibited by association with EGR1. Phosphorylation by CDK8/9 creates binding sites for YAP1, and subsequent phosphorylation by GSK3 switches off YAP1 binding and adds binding sites for SMURF1. Ubiquitinated by SMAD-specific E3 ubiquitin ligase SMURF1, leading to its degradation. Monoubiquitinated, leading to prevent DNA-binding. Deubiquitination by USP15 alleviates inhibition and promotes activation of TGF-beta target genes. Dephosphorylation, probably by PPM1A, induces its export from the nucleus to the cytoplasm. Phospho-SMAD1 is ubiquitinated by CHIP leading to disruption of the SMAD1-SMAD4 complex.

Its subcellular location is the cytoplasm. It localises to the nucleus. In terms of biological role, transcriptional modulator that plays a role in various cellular processes, including embryonic development, cell differentiation, and tissue homeostasis. Upon BMP ligand binding to their receptors at the cell surface, is phosphorylated by activated type I BMP receptors (BMPRIs) and associates with SMAD4 to form an heteromeric complex which translocates into the nucleus acting as transcription factor. In turn, the hetero-trimeric complex recognizes cis-regulatory elements containing Smad Binding Elements (SBEs) to modulate the outcome of the signaling network. SMAD1/OAZ1/PSMB4 complex mediates the degradation of the CREBBP/EP300 repressor SNIP1. The sequence is that of Mothers against decapentaplegic homolog 1 (SMAD1) from Coturnix japonica (Japanese quail).